The chain runs to 306 residues: uncharacterized protein (306 aa).

The tract at residues 287-306 (DEEGKSEDAKRQEEEKKKSS) is disordered.

Belongs to the aldo/keto reductase family.

The protein localises to the cytoplasm. Its subcellular location is the nucleus. This is an uncharacterized protein from Schizosaccharomyces pombe (strain 972 / ATCC 24843) (Fission yeast).